Reading from the N-terminus, the 406-residue chain is Probable mannan endo-1,4-beta-mannosidase C (406 aa).

A signal peptide spans 1-20; that stretch reads MLINFEKVLSLALLAGSVSG. The N-linked (GlcNAc...) asparagine glycan is linked to Asn58. Trp80 is a substrate binding site. Asn86 and Asn114 each carry an N-linked (GlcNAc...) asparagine glycan. Residue Asn201 participates in substrate binding. Residue Glu202 is the Proton donor of the active site. A substrate-binding site is contributed by Tyr287. Glu320 acts as the Nucleophile in catalysis. N-linked (GlcNAc...) asparagine glycosylation is present at Asn338. Trp362 is a binding site for substrate.

It belongs to the glycosyl hydrolase 5 (cellulase A) family.

The protein resides in the secreted. The catalysed reaction is Random hydrolysis of (1-&gt;4)-beta-D-mannosidic linkages in mannans, galactomannans and glucomannans.. Its function is as follows. Endo-1,4-mannanase, a crucial enzyme for depolymerization of seed galactomannans and wood galactoglucomannans. In Aspergillus terreus (strain NIH 2624 / FGSC A1156), this protein is Probable mannan endo-1,4-beta-mannosidase C (manC).